Here is a 188-residue protein sequence, read N- to C-terminus: MGTIADDILDDLHGRILKTLDQLRTELAAVRTGRASLHLLDNVRVDYYGTPTPLNQVATLSVPEARLIVVKPWEKSMIPPIEKAIRDGNLGLNPMSDKDLVRVPIPALTEERRKEIVKQVKHKGEEHKIAVRNVRREAKELIEVAEKDGDISGDDAEKALEKMQKETDEGVKKIDEIVAAKEKDVLQV.

This sequence belongs to the RRF family.

It localises to the cytoplasm. Its function is as follows. Responsible for the release of ribosomes from messenger RNA at the termination of protein biosynthesis. May increase the efficiency of translation by recycling ribosomes from one round of translation to another. This is Ribosome-recycling factor from Anaeromyxobacter sp. (strain K).